Reading from the N-terminus, the 338-residue chain is Glycerol-3-phosphate dehydrogenase [NAD(P)+] (338 aa).

NADPH contacts are provided by S13, W14, and K108. Positions 108, 139, and 141 each coordinate sn-glycerol 3-phosphate. Position 143 (A143) interacts with NADPH. Sn-glycerol 3-phosphate contacts are provided by K194, D247, S257, R258, and N259. Residue K194 is the Proton acceptor of the active site. NADPH is bound at residue R258. 2 residues coordinate NADPH: V282 and E284.

It belongs to the NAD-dependent glycerol-3-phosphate dehydrogenase family.

Its subcellular location is the cytoplasm. It catalyses the reaction sn-glycerol 3-phosphate + NAD(+) = dihydroxyacetone phosphate + NADH + H(+). It carries out the reaction sn-glycerol 3-phosphate + NADP(+) = dihydroxyacetone phosphate + NADPH + H(+). Its pathway is membrane lipid metabolism; glycerophospholipid metabolism. Catalyzes the reduction of the glycolytic intermediate dihydroxyacetone phosphate (DHAP) to sn-glycerol 3-phosphate (G3P), the key precursor for phospholipid synthesis. In Streptococcus pyogenes serotype M28 (strain MGAS6180), this protein is Glycerol-3-phosphate dehydrogenase [NAD(P)+].